Here is a 961-residue protein sequence, read N- to C-terminus: Transcription factor MYB3R-4 (961 aa).

The interval 1 to 33 is disordered; that stretch reads MEAESSTPQERIPKLRHGRTSGPARRSTRGQWT. HTH myb-type domains are found at residues 24 to 75, 76 to 131, and 132 to 182; these read ARRS…QKVL, NPEL…NPAI, and NKEA…KKKL. 3 DNA-binding regions (H-T-H motif) span residues 52 to 75, 104 to 127, and 155 to 178; these read WKKI…QKVL, WSTI…HNHL, and WAEL…HSSV. 2 disordered regions span residues 390–457 and 534–555; these read GHSV…LIIS and RPHS…EDMG. 2 stretches are compositionally biased toward polar residues: residues 391 to 405 and 416 to 430; these read HSVS…NEFN and SSAS…TKSP. A compositionally biased stretch (low complexity) spans 431-444; the sequence is TQSSSSRFTATAAS. Residues 534–554 show a composition bias toward basic and acidic residues; sequence RPHSLPKHEPNMTNEQHHEDM. The Nuclear localization signal signature appears at 612 to 619; sequence GKKTLVGA. Positions 756-781 are disordered; sequence NTGKPVLSTPGQSVTKAEKAQVSTPR. The span at 764 to 781 shows a compositional bias: polar residues; sequence TPGQSVTKAEKAQVSTPR.

In terms of assembly, component of a DREAM-like complex which modulates a variety of developmentally regulated genes and of the mitotic genes in proliferating and differentiated cells. Associates with CDKA-1, RBR1 and E2FB, but not with E2FC, in proliferating cells, at early stages of leaves development. In terms of tissue distribution, expressed in roots, cotyledons and leaves, especially in vascular tissues, and in flowers.

The protein localises to the nucleus. Transcription factor that binds 5'-AACGG-3' motifs in gene promoters. Involved in the regulation of cytokinesis, probably via the activation of several G2/M phase-specific genes transcription (e.g. KNOLLE). Required for the maintenance of diploidy. Functionally, involved in transcription regulation during induced endoreduplication at the powdery mildew (e.g. G.orontii) infection site, thus promoting G.orontii growth and reproduction. This Arabidopsis thaliana (Mouse-ear cress) protein is Transcription factor MYB3R-4.